A 492-amino-acid polypeptide reads, in one-letter code: Bifunctional protein GlmU (492 aa).

Residues 1 to 241 form a pyrophosphorylase region; that stretch reads MIPENTGPAA…RWQVEGANDR (241 aa). Residues 14-17, Lys-28, Gln-81, 86-87, 112-114, Gly-151, Glu-166, Asn-181, and Asn-239 contribute to the UDP-N-acetyl-alpha-D-glucosamine site; these read LAAG, GT, and YGD. A Mg(2+)-binding site is contributed by Asp-114. Asn-239 contacts Mg(2+). Positions 242–262 are linker; it reads VQLAALGAELNRRTVEAWMRA. The N-acetyltransferase stretch occupies residues 263 to 492; the sequence is GVTVVDPSTT…STPASTEEGK (230 aa). 2 residues coordinate UDP-N-acetyl-alpha-D-glucosamine: Arg-344 and Lys-362. The active-site Proton acceptor is the His-374. Residues Tyr-377 and Asn-388 each contribute to the UDP-N-acetyl-alpha-D-glucosamine site. Acetyl-CoA-binding positions include 397–398, Ser-416, and Ala-434; that span reads NY. Positions 460 to 492 are disordered; that stretch reads WVPANRPGSRSAELAQAAINNSSSTPASTEEGK. Residues 477–492 are compositionally biased toward polar residues; it reads AINNSSSTPASTEEGK.

The protein in the N-terminal section; belongs to the N-acetylglucosamine-1-phosphate uridyltransferase family. In the C-terminal section; belongs to the transferase hexapeptide repeat family. Homotrimer. Requires Mg(2+) as cofactor.

The protein resides in the cytoplasm. The catalysed reaction is alpha-D-glucosamine 1-phosphate + acetyl-CoA = N-acetyl-alpha-D-glucosamine 1-phosphate + CoA + H(+). The enzyme catalyses N-acetyl-alpha-D-glucosamine 1-phosphate + UTP + H(+) = UDP-N-acetyl-alpha-D-glucosamine + diphosphate. The protein operates within nucleotide-sugar biosynthesis; UDP-N-acetyl-alpha-D-glucosamine biosynthesis; N-acetyl-alpha-D-glucosamine 1-phosphate from alpha-D-glucosamine 6-phosphate (route II): step 2/2. Its pathway is nucleotide-sugar biosynthesis; UDP-N-acetyl-alpha-D-glucosamine biosynthesis; UDP-N-acetyl-alpha-D-glucosamine from N-acetyl-alpha-D-glucosamine 1-phosphate: step 1/1. It functions in the pathway bacterial outer membrane biogenesis; LPS lipid A biosynthesis. Catalyzes the last two sequential reactions in the de novo biosynthetic pathway for UDP-N-acetylglucosamine (UDP-GlcNAc). The C-terminal domain catalyzes the transfer of acetyl group from acetyl coenzyme A to glucosamine-1-phosphate (GlcN-1-P) to produce N-acetylglucosamine-1-phosphate (GlcNAc-1-P), which is converted into UDP-GlcNAc by the transfer of uridine 5-monophosphate (from uridine 5-triphosphate), a reaction catalyzed by the N-terminal domain. The chain is Bifunctional protein GlmU from Pseudarthrobacter chlorophenolicus (strain ATCC 700700 / DSM 12829 / CIP 107037 / JCM 12360 / KCTC 9906 / NCIMB 13794 / A6) (Arthrobacter chlorophenolicus).